Here is a 72-residue protein sequence, read N- to C-terminus: Translation initiation factor IF-1 (72 aa).

The region spanning 1–72 (MAKDDVIEVE…TRGRITYRYK (72 aa)) is the S1-like domain. Phosphotyrosine is present on Tyr60.

The protein belongs to the IF-1 family. Component of the 30S ribosomal translation pre-initiation complex which assembles on the 30S ribosome in the order IF-2 and IF-3, IF-1 and N-formylmethionyl-tRNA(fMet); mRNA recruitment can occur at any time during PIC assembly.

The protein localises to the cytoplasm. One of the essential components for the initiation of protein synthesis. Stabilizes the binding of IF-2 and IF-3 on the 30S subunit to which N-formylmethionyl-tRNA(fMet) subsequently binds. Helps modulate mRNA selection, yielding the 30S pre-initiation complex (PIC). Upon addition of the 50S ribosomal subunit IF-1, IF-2 and IF-3 are released leaving the mature 70S translation initiation complex. This chain is Translation initiation factor IF-1, found in Oceanobacillus iheyensis (strain DSM 14371 / CIP 107618 / JCM 11309 / KCTC 3954 / HTE831).